Consider the following 912-residue polypeptide: Intercellular adhesion molecule 5 (912 aa).

The signal sequence occupies residues 1 to 29 (MPGPSPGLRALLGFWVALGLGILRLSAVA). The Extracellular segment spans residues 30–826 (QEPFWADLQP…RITVRVAGPW (797 aa)). Ig-like C2-type domains lie at 47–127 (GGSL…PLPP), 132–232 (GENF…RLLA), 239–324 (DSQS…LLTL), 332–395 (GKLV…NGSA), 403–481 (PRLD…VTLT), 486–561 (PALD…VAVT), 566–645 (PSFE…NPLG), 659–734 (PQMD…TVGV), and 738–819 (PVVA…RRIT). The N-linked (GlcNAc...) (high mannose) asparagine glycan is linked to Asn53. Disulfide bonds link Cys54–Cys97 and Cys58–Cys101. Asn134 carries N-linked (GlcNAc...) asparagine glycosylation. Cysteines 139 and 195 form a disulfide. Phosphothreonine is present on residues Thr179 and Thr181. 2 N-linked (GlcNAc...) asparagine glycosylation sites follow: Asn192 and Asn211. An intrachain disulfide couples Cys246 to Cys297. N-linked (GlcNAc...) asparagine glycans are attached at residues Asn311, Asn366, and Asn392. Cys339 and Cys378 are disulfide-bonded. Intrachain disulfides connect Cys410–Cys465, Cys493–Cys546, and Cys573–Cys638. 2 N-linked (GlcNAc...) asparagine glycosylation sites follow: Asn576 and Asn639. Cysteines 666 and 717 form a disulfide. The disordered stretch occupies residues 678 to 708 (AAGPACARGRPSPRVRCSREGAPRPARPRVS). Asn756, Asn787, and Asn788 each carry an N-linked (GlcNAc...) asparagine glycan. Residues Cys761 and Cys806 are joined by a disulfide bond. The chain crosses the membrane as a helical span at residues 827 to 847 (LWIAVGGAVGGAVLLAAGAGL). Over 848–912 (AFYVQSTACK…EVFAIQLTSA (65 aa)) the chain is Cytoplasmic. The tract at residues 880–902 (GGAGSGAEGGPEAEDSAESPAGG) is disordered.

This sequence belongs to the immunoglobulin superfamily. ICAM family. Post-translationally, glycosylation at Asn-53 is critical for functional folding. As to expression, expressed on neurons in the most rostral segment of the mammalian brain, the telencephalon.

It is found in the membrane. Its function is as follows. ICAM proteins are ligands for the leukocyte adhesion protein LFA-1 (integrin alpha-L/beta-2). This chain is Intercellular adhesion molecule 5 (ICAM5), found in Oryctolagus cuniculus (Rabbit).